The following is a 239-amino-acid chain: Serine protease SplF (239 aa).

An N-terminal signal peptide occupies residues 1–36; that stretch reads MNKNIIIKSIAALTILTSITGVGTTVVDGIQQTAKA. Residues H75, D114, and S192 each act as charge relay system in the active site.

It belongs to the peptidase S1B family.

It is found in the secreted. The sequence is that of Serine protease SplF (splF) from Staphylococcus aureus (strain JH9).